Consider the following 73-residue polypeptide: Conotoxin im23b (73 aa).

The N-terminal stretch at 1–22 (MIMRMTLTLFVLVVMTAASASG) is a signal peptide. Residues 23-28 (DALTEA) constitute a propeptide that is removed on maturation. 3 disulfides stabilise this stretch: Cys-34–Cys-41, Cys-45–Cys-55, and Cys-56–Cys-71.

The protein belongs to the conotoxin K superfamily. In terms of tissue distribution, expressed by the venom duct.

It localises to the secreted. In terms of biological role, neurotoxin that induces excitatory symptoms in mice following intracranial administration. No symptoms are observed after intraperitoneal and intravenous (tail vein) injections. This Conus imperialis (Imperial cone) protein is Conotoxin im23b.